The primary structure comprises 139 residues: Putative nickel-responsive regulator (139 aa).

Ni(2+) contacts are provided by H76, H87, H89, and C95.

This sequence belongs to the transcriptional regulatory CopG/NikR family. Ni(2+) serves as cofactor.

Transcriptional regulator. The protein is Putative nickel-responsive regulator of Rhodopseudomonas palustris (strain HaA2).